The sequence spans 138 residues: Augmin complex subunit msd1 (138 aa).

Component of the augmin complex composed of dgt2, dgt3, dgt4, dgt5, dgt6, msd1, msd5 and wac. The complex interacts directly or indirectly with microtubules and is required for centrosome-independent generation of spindle microtubules.

The protein resides in the cytoplasm. The protein localises to the cytoskeleton. Its subcellular location is the spindle. In terms of biological role, as part of the augmin complex, plays a role in centrosome-independent generation of spindle microtubules. The complex is required for mitotic spindle assembly through its involvement in localizing gamma-tubulin to spindle microtubules. msd1 is required for microtubule nucleation from within the mitotic spindle and for localization of Grip71 to centrosomes and mitotic spindle. This chain is Augmin complex subunit msd1, found in Drosophila melanogaster (Fruit fly).